The primary structure comprises 397 residues: MSASFSPHTITLIKSTVPLLAEHGTTIIEAMYHRLFEDPQIEALFNQANQKNGTQIHALAGAILAYARNIDNPGVLASAIERISQKHVGYAIHPEHYPHVATALLGAIKQVLGDVATSEVLEAWGEAYWFIANLLKDREAVIREGIMTKNGGWIHWRRFVISKRIPESETITSFMLHPEDGGPVVPHQAGQYLTFRFDAAGMPGMKRNYSISCGPNSDHYRITVKREHGTGASAFLHDQAKVGTIIECTPPVGDFFLPSVIERPIVLLSGGVGLTPMVSMMEQIAEAYPDAQVWYVHGTQNRETHAMDAHIRALVSRHKHMKATTFYTQRSEADDAEAGFITIDWLRANTPFQKADFYLCGPRPFLRTFVRDLIGAGVPAAQVHYEFFGPMDEEMAA.

Positions 4-140 (SFSPHTITLI…IANLLKDREA (137 aa)) constitute a Globin domain. Position 87 (H87) interacts with heme b. Catalysis depends on charge relay system residues Y97 and E139. The reductase stretch occupies residues 151–397 (GGWIHWRRFV…FGPMDEEMAA (247 aa)). Residues 154-258 (IHWRRFVISK…TPPVGDFFLP (105 aa)) enclose the FAD-binding FR-type domain. Residues Y192 and 207–210 (RNYS) contribute to the FAD site. 271-276 (GVGLTP) contributes to the NADP(+) binding site. Residue 387–390 (FFGP) participates in FAD binding.

Belongs to the globin family. Two-domain flavohemoproteins subfamily. It in the C-terminal section; belongs to the flavoprotein pyridine nucleotide cytochrome reductase family. Heme b serves as cofactor. FAD is required as a cofactor.

It catalyses the reaction 2 nitric oxide + NADPH + 2 O2 = 2 nitrate + NADP(+) + H(+). The catalysed reaction is 2 nitric oxide + NADH + 2 O2 = 2 nitrate + NAD(+) + H(+). In terms of biological role, is involved in NO detoxification in an aerobic process, termed nitric oxide dioxygenase (NOD) reaction that utilizes O(2) and NAD(P)H to convert NO to nitrate, which protects the bacterium from various noxious nitrogen compounds. Therefore, plays a central role in the inducible response to nitrosative stress. This chain is Flavohemoprotein, found in Xylella fastidiosa (strain Temecula1 / ATCC 700964).